Reading from the N-terminus, the 721-residue chain is Polyribonucleotide nucleotidyltransferase (721 aa).

D495 and D501 together coordinate Mg(2+). The 60-residue stretch at 562–621 (PRLLSFRIDPELIGTVIGPGGRTIKGITERTNTKIDIEDSGIVTIASHDGAAADEAQKII) folds into the KH domain. The region spanning 631–699 (GEVFSGSITR…NRGRINLTLR (69 aa)) is the S1 motif domain. A disordered region spans residues 698–721 (LRGVPQSGDGAGEEPQPTPVAPLS).

The protein belongs to the polyribonucleotide nucleotidyltransferase family. Requires Mg(2+) as cofactor.

It localises to the cytoplasm. It carries out the reaction RNA(n+1) + phosphate = RNA(n) + a ribonucleoside 5'-diphosphate. In terms of biological role, involved in mRNA degradation. Catalyzes the phosphorolysis of single-stranded polyribonucleotides processively in the 3'- to 5'-direction. In Parasynechococcus marenigrum (strain WH8102), this protein is Polyribonucleotide nucleotidyltransferase.